The primary structure comprises 233 residues: Somatolactin (233 aa).

The first 24 residues, 1-24, serve as a signal peptide directing secretion; it reads MNMMQVMQSVVWAVLLWPCLVSLG. Cystine bridges form between C29–C39, C89–C205, and C222–C230.

Belongs to the somatotropin/prolactin family. As to expression, pituitary gland.

The protein resides in the secreted. Its function is as follows. May be associated with ion regulation and reproduction. In Oncorhynchus keta (Chum salmon), this protein is Somatolactin.